Consider the following 109-residue polypeptide: uncharacterized protein (109 aa).

A helical transmembrane segment spans residues 12-32 (PNILIKGVYIFVLYGMCICIV).

The protein resides in the membrane. This is an uncharacterized protein from Saccharomyces cerevisiae (strain ATCC 204508 / S288c) (Baker's yeast).